The sequence spans 196 residues: Peptidyl-tRNA hydrolase (196 aa).

H15 is a binding site for tRNA. H20 serves as the catalytic Proton acceptor. TRNA contacts are provided by Y66, N68, and N114.

It belongs to the PTH family. In terms of assembly, monomer.

The protein localises to the cytoplasm. The enzyme catalyses an N-acyl-L-alpha-aminoacyl-tRNA + H2O = an N-acyl-L-amino acid + a tRNA + H(+). In terms of biological role, hydrolyzes ribosome-free peptidyl-tRNAs (with 1 or more amino acids incorporated), which drop off the ribosome during protein synthesis, or as a result of ribosome stalling. Its function is as follows. Catalyzes the release of premature peptidyl moieties from peptidyl-tRNA molecules trapped in stalled 50S ribosomal subunits, and thus maintains levels of free tRNAs and 50S ribosomes. The chain is Peptidyl-tRNA hydrolase from Polynucleobacter necessarius subsp. necessarius (strain STIR1).